Reading from the N-terminus, the 250-residue chain is Virulence plasmid protein pGP6-D-related protein (250 aa).

The protein belongs to the UPF0137 (pGP6-D) family.

In Chlamydia pneumoniae (Chlamydophila pneumoniae), this protein is Virulence plasmid protein pGP6-D-related protein.